The sequence spans 71 residues: Large ribosomal subunit protein bL31 (71 aa).

Residues C16, C18, C37, and C40 each coordinate Zn(2+).

The protein belongs to the bacterial ribosomal protein bL31 family. Type A subfamily. Part of the 50S ribosomal subunit. Requires Zn(2+) as cofactor.

Binds the 23S rRNA. This is Large ribosomal subunit protein bL31 from Nitratidesulfovibrio vulgaris (strain ATCC 29579 / DSM 644 / CCUG 34227 / NCIMB 8303 / VKM B-1760 / Hildenborough) (Desulfovibrio vulgaris).